We begin with the raw amino-acid sequence, 146 residues long: Hemoglobin subunit beta-2 (146 aa).

The region spanning 2 to 146 is the Globin domain; it reads HWSAEEKQLI…VAHALARRYH (145 aa). Heme b is bound by residues H63 and H92.

This sequence belongs to the globin family. Heterotetramer of two alpha chains and two beta chains. As to expression, red blood cells.

Functionally, involved in oxygen transport from the lung to the various peripheral tissues. In Naja naja (Indian cobra), this protein is Hemoglobin subunit beta-2 (HBB2).